Reading from the N-terminus, the 308-residue chain is Protein translocase subunit SecF (308 aa).

6 helical membrane passes run Ser-28–Ile-48, Ile-140–Val-160, Trp-164–Phe-184, Leu-194–Ile-214, Ile-246–Ala-266, and Ile-272–Ile-292.

Belongs to the SecD/SecF family. SecF subfamily. As to quaternary structure, forms a complex with SecD. Part of the essential Sec protein translocation apparatus which comprises SecA, SecYEG and auxiliary proteins SecDF-YajC and YidC.

Its subcellular location is the cell inner membrane. In terms of biological role, part of the Sec protein translocase complex. Interacts with the SecYEG preprotein conducting channel. SecDF uses the proton motive force (PMF) to complete protein translocation after the ATP-dependent function of SecA. This chain is Protein translocase subunit SecF, found in Rickettsia rickettsii (strain Sheila Smith).